The primary structure comprises 164 residues: uncharacterized protein (164 aa).

One can recognise an HTH marR-type domain in the interval 28-157 (EAEILYQLQG…LIDVLARMRN (130 aa)). Positions 71–94 (QSDLQKKVNIDSAAVTRHLKQLES) form a DNA-binding region, H-T-H motif.

This is an uncharacterized protein from Bacillus subtilis (strain 168).